The primary structure comprises 282 residues: 2-dehydro-3-deoxyphosphooctonate aldolase (282 aa).

It belongs to the KdsA family.

Its subcellular location is the cytoplasm. It catalyses the reaction D-arabinose 5-phosphate + phosphoenolpyruvate + H2O = 3-deoxy-alpha-D-manno-2-octulosonate-8-phosphate + phosphate. Its pathway is carbohydrate biosynthesis; 3-deoxy-D-manno-octulosonate biosynthesis; 3-deoxy-D-manno-octulosonate from D-ribulose 5-phosphate: step 2/3. It participates in bacterial outer membrane biogenesis; lipopolysaccharide biosynthesis. The sequence is that of 2-dehydro-3-deoxyphosphooctonate aldolase from Shewanella oneidensis (strain ATCC 700550 / JCM 31522 / CIP 106686 / LMG 19005 / NCIMB 14063 / MR-1).